The following is a 217-amino-acid chain: Large ribosomal subunit protein uL3 (217 aa).

Belongs to the universal ribosomal protein uL3 family. Part of the 50S ribosomal subunit. Forms a cluster with proteins L14 and L19.

Its function is as follows. One of the primary rRNA binding proteins, it binds directly near the 3'-end of the 23S rRNA, where it nucleates assembly of the 50S subunit. In Mycobacterium sp. (strain KMS), this protein is Large ribosomal subunit protein uL3.